The primary structure comprises 522 residues: ATP synthase subunit alpha (522 aa).

Glycine 176–threonine 183 provides a ligand contact to ATP.

The protein belongs to the ATPase alpha/beta chains family. F-type ATPases have 2 components, CF(1) - the catalytic core - and CF(0) - the membrane proton channel. CF(1) has five subunits: alpha(3), beta(3), gamma(1), delta(1), epsilon(1). CF(0) has four main subunits: a(1), b(1), b'(1) and c(9-12).

It localises to the cell membrane. The catalysed reaction is ATP + H2O + 4 H(+)(in) = ADP + phosphate + 5 H(+)(out). Functionally, produces ATP from ADP in the presence of a proton gradient across the membrane. The alpha chain is a regulatory subunit. This chain is ATP synthase subunit alpha, found in Chloroflexus aurantiacus (strain ATCC 29366 / DSM 635 / J-10-fl).